Here is a 596-residue protein sequence, read N- to C-terminus: Succinate dehydrogenase flavoprotein subunit (596 aa).

FAD is bound by residues 18–23, 41–56, and D225; these read GAGGAG and SKLF…AQGG. H49 carries the post-translational modification Tele-8alpha-FAD histidine. Positions 246 and 258 each coordinate substrate. The active-site Proton acceptor is the R290. Residue H357 coordinates substrate. E391 is an FAD binding site. R402 contacts substrate. 407–408 contacts FAD; it reads SL.

Belongs to the FAD-dependent oxidoreductase 2 family. FRD/SDH subfamily. Part of an enzyme complex containing four subunits: a flavoprotein, an iron-sulfur, cytochrome b-556, and a hydrophobic anchor protein. Requires FAD as cofactor.

It is found in the cell inner membrane. It carries out the reaction a quinone + succinate = fumarate + a quinol. The protein operates within carbohydrate metabolism; tricarboxylic acid cycle; fumarate from succinate (bacterial route): step 1/1. The polypeptide is Succinate dehydrogenase flavoprotein subunit (sdhA) (Rickettsia bellii (strain RML369-C)).